The primary structure comprises 280 residues: Nitrogenase iron protein (280 aa).

Gly9–Ser16 is an ATP binding site. A [4Fe-4S] cluster-binding site is contributed by Cys97. Position 100 is an ADP-ribosylarginine; by dinitrogenase reductase ADP-ribosyltransferase (Arg100). [4Fe-4S] cluster is bound at residue Cys132.

Belongs to the NifH/BchL/ChlL family. As to quaternary structure, homodimer. [4Fe-4S] cluster serves as cofactor. In terms of processing, the reversible ADP-ribosylation of Arg-100 inactivates the nitrogenase reductase and regulates nitrogenase activity.

The catalysed reaction is N2 + 8 reduced [2Fe-2S]-[ferredoxin] + 16 ATP + 16 H2O = H2 + 8 oxidized [2Fe-2S]-[ferredoxin] + 2 NH4(+) + 16 ADP + 16 phosphate + 6 H(+). The key enzymatic reactions in nitrogen fixation are catalyzed by the nitrogenase complex, which has 2 components: the iron protein and the molybdenum-iron protein. The protein is Nitrogenase iron protein of Desulforudis audaxviator (strain MP104C).